Here is a 350-residue protein sequence, read N- to C-terminus: Biotin synthase (350 aa).

Residues 38-256 (NYVQVSTLLS…IAIARIMMPQ (219 aa)) form the Radical SAM core domain. 3 residues coordinate [4Fe-4S] cluster: Cys-53, Cys-57, and Cys-60. 4 residues coordinate [2Fe-2S] cluster: Cys-97, Cys-128, Cys-188, and Arg-260.

It belongs to the radical SAM superfamily. Biotin synthase family. As to quaternary structure, homodimer. The cofactor is [4Fe-4S] cluster. [2Fe-2S] cluster is required as a cofactor.

It catalyses the reaction (4R,5S)-dethiobiotin + (sulfur carrier)-SH + 2 reduced [2Fe-2S]-[ferredoxin] + 2 S-adenosyl-L-methionine = (sulfur carrier)-H + biotin + 2 5'-deoxyadenosine + 2 L-methionine + 2 oxidized [2Fe-2S]-[ferredoxin]. It participates in cofactor biosynthesis; biotin biosynthesis; biotin from 7,8-diaminononanoate: step 2/2. Functionally, catalyzes the conversion of dethiobiotin (DTB) to biotin by the insertion of a sulfur atom into dethiobiotin via a radical-based mechanism. This chain is Biotin synthase, found in Vibrio campbellii (strain ATCC BAA-1116).